Reading from the N-terminus, the 1582-residue chain is ATP-binding cassette sub-family C member 8 (1582 aa).

The Extracellular portion of the chain corresponds to 1 to 30; that stretch reads MPLAFCGTENHSAAYRVDQGVLNNGCFVDA. The cysteines at positions 6 and 26 are disulfide-linked. Asn-10 carries an N-linked (GlcNAc...) asparagine glycan. Residues 31–47 form a helical membrane-spanning segment; it reads LNVVPHVFLLFITFPIL. The Cytoplasmic portion of the chain corresponds to 48 to 72; that stretch reads FIGWGSQSSKVHIHHSTWLHFPGHN. The helical transmembrane segment at 73–89 threads the bilayer; sequence LRWILTFILLFVLVCEI. At 90–106 the chain is on the extracellular side; that stretch reads AEGILSDGVTESRHLHL. Residues 107–123 form a helical membrane-spanning segment; the sequence is YMPAGMAFMAAITSVVY. Residues 124 to 136 lie on the Cytoplasmic side of the membrane; the sequence is YHNIETSNFPKLL. A helical transmembrane segment spans residues 137–153; the sequence is IALLIYWTLAFITKTIK. Residues 154-169 are Extracellular-facing; sequence FVKFYDHAIGFSQLRF. The helical transmembrane segment at 170 to 186 threads the bilayer; that stretch reads CLTGLLVILYGMLLLVE. Topologically, residues 187–303 are cytoplasmic; the sequence is VNVIRVRRYI…AFGRRLILSS (117 aa). Residues 299 to 602 form the ABC transmembrane type-1 1 domain; that stretch reads LILSSTFRIL…LSSVVRSTVK (304 aa). Residues 304–319 form a helical membrane-spanning segment; that stretch reads TFRILADLLGFAGPLC. At 320–356 the chain is on the extracellular side; it reads IFGIVDHLGKENHVFQPKTQFLGVYFVSSQEFLGNAY. A helical transmembrane segment spans residues 357 to 372; sequence VLAVLLFLALLLQRTF. The Cytoplasmic segment spans residues 373–438; the sequence is LQASYYVAIE…MWFFFLCPNL (66 aa). The helical transmembrane segment at 439–454 threads the bilayer; it reads WTMPVQIIVGVILLYY. Residues 455 to 460 lie on the Extracellular side of the membrane; the sequence is ILGVSA. A helical transmembrane segment spans residues 461–473; it reads LIGAAVIILLAPV. Residues 474-541 lie on the Cytoplasmic side of the membrane; that stretch reads QYFVATKLSQ…SLRAFAVYTS (68 aa). Residues 542 to 557 form a helical membrane-spanning segment; it reads ISIFMNTAIPIAAVLI. Over 558-576 the chain is Extracellular; sequence TFVGHVSFFKESDLSPSVA. A helical membrane pass occupies residues 577 to 592; the sequence is FASLSLFHILVTPLFL. Residues 593–1013 lie on the Cytoplasmic side of the membrane; it reads LSSVVRSTVK…YLSSAGILLL (421 aa). One can recognise an ABC transporter 1 domain in the interval 679–930; the sequence is VQIIGGFFTW…ECQLFEHWKT (252 aa). 4 residues coordinate ATP: Trp-688, Gly-716, Ser-720, and Ser-721. A Mg(2+)-binding site is contributed by Ser-720. Residues 741-766 form a disordered region; it reads SNLPDSEGEDPSSPERETAAGSDIRS. A Mg(2+)-binding site is contributed by Gln-775. Residues 939-950 show a composition bias toward basic and acidic residues; that stretch reads LEKETVMERKAS. The segment at 939–962 is disordered; the sequence is LEKETVMERKASEPSQGLPRAMSS. The ABC transmembrane type-1 2 domain maps to 1013-1307; that stretch reads LSLLVFSQLL…MVRNLADMEI (295 aa). A helical membrane pass occupies residues 1014–1031; that stretch reads SLLVFSQLLKHMVLVAID. Residues 1032–1067 lie on the Extracellular side of the membrane; the sequence is YWLAKWTDSALVLSPAARNCSLSQECDLDQSVYAMV. N-linked (GlcNAc...) asparagine glycosylation is present at Asn-1050. Residues 1068 to 1084 traverse the membrane as a helical segment; that stretch reads FTLLCSLGIVLCLVTSV. Topologically, residues 1085 to 1143 are cytoplasmic; sequence TVEWTGLKVAKRLHRSLLNRIILAPMRFFETTPLGSILNRFSSDCNTIDQHIPSTLECL. A helical transmembrane segment spans residues 1144-1161; that stretch reads SRSTLLCVSALTVISYVT. Pro-1162 is a topological domain (extracellular). Residues 1163–1175 form a helical membrane-spanning segment; that stretch reads VFLVALLPLAVVC. Topologically, residues 1176-1249 are cytoplasmic; that stretch reads YFIQKYFRVA…FLTAANRWLE (74 aa). The chain crosses the membrane as a helical span at residues 1250-1265; the sequence is VCMEYIGACVVLIAAA. Over 1266-1281 the chain is Extracellular; sequence TSISNSLHRELSAGLV. The chain crosses the membrane as a helical span at residues 1282–1297; the sequence is GLGLTYALMVSNYLNW. The Cytoplasmic segment spans residues 1298 to 1582; it reads MVRNLADMEI…VFASFVRADK (285 aa). Positions 1345–1579 constitute an ABC transporter 2 domain; it reads IQIQNLSVRY…KDSVFASFVR (235 aa). Thr-1381, Gly-1382, Gly-1384, Lys-1385, Ser-1386, and Ser-1387 together coordinate ADP. Ser-1483 contacts ATP.

Belongs to the ABC transporter superfamily. ABCC family. Conjugate transporter (TC 3.A.1.208) subfamily. In terms of assembly, forms an heterooctamer with KCNJ11; four ABCC8/SUR1 molecules interact with one KCNJ11 homotetramer.

It is found in the cell membrane. With respect to regulation, KATP channels are regulated by cytoplasmic ATP/ADP ratios; ATP inhibits the channel by closing the pore, while ADP activates the channel. Activated by phosphatidylinositol 4,5-biphosphate (PtdIns(4,5)P2). In terms of biological role, regulator subunit of pancreatic ATP-sensitive potassium channel (KATP), playing a major role in the regulation of insulin release. In pancreatic cells, it forms KATP channels with KCNJ11; KCNJ11 forms the channel pore while ABCC8 is required for activation and regulation. The sequence is that of ATP-binding cassette sub-family C member 8 (ABCC8) from Cricetus cricetus (Black-bellied hamster).